Reading from the N-terminus, the 295-residue chain is tRNA dimethylallyltransferase (295 aa).

An ATP-binding site is contributed by 11-18; the sequence is GPTVSGKS. 13 to 18 contributes to the substrate binding site; the sequence is TVSGKS. 2 interaction with substrate tRNA regions span residues 36–39 and 158–162; these read DSMQ and QRIIR.

The protein belongs to the IPP transferase family. As to quaternary structure, monomer. Mg(2+) serves as cofactor.

It catalyses the reaction adenosine(37) in tRNA + dimethylallyl diphosphate = N(6)-dimethylallyladenosine(37) in tRNA + diphosphate. Its function is as follows. Catalyzes the transfer of a dimethylallyl group onto the adenine at position 37 in tRNAs that read codons beginning with uridine, leading to the formation of N6-(dimethylallyl)adenosine (i(6)A). The chain is tRNA dimethylallyltransferase from Bartonella quintana (strain Toulouse) (Rochalimaea quintana).